A 340-amino-acid chain; its full sequence is Agmatinase, mitochondrial (340 aa).

Positions 150, 173, 175, 177, 264, and 266 each coordinate Mn(2+).

It belongs to the arginase family. Agmatinase subfamily. It depends on Mn(2+) as a cofactor.

It localises to the mitochondrion. The catalysed reaction is agmatine + H2O = urea + putrescine. It functions in the pathway amine and polyamine biosynthesis; putrescine biosynthesis via agmatine pathway; putrescine from agmatine: step 1/1. This chain is Agmatinase, mitochondrial (AGMAT), found in Gallus gallus (Chicken).